A 144-amino-acid polypeptide reads, in one-letter code: Small ribosomal subunit protein eS10A (144 aa).

The segment at 90–144 is disordered; it reads THKRQVRPTAPRAGRPEPRERASADAGYRRAEKKDEGAAPSGFAPSFRGGFGRPQ. Residues 103-126 are compositionally biased toward basic and acidic residues; it reads GRPEPRERASADAGYRRAEKKDEG.

Belongs to the eukaryotic ribosomal protein eS10 family. As to quaternary structure, component of the small ribosomal subunit (SSU). Mature yeast ribosomes consist of a small (40S) and a large (60S) subunit. The 40S small subunit contains 1 molecule of ribosomal RNA (18S rRNA) and at least 33 different proteins. The large 60S subunit contains 3 rRNA molecules (25S, 5.8S and 5S rRNA) and at least 46 different proteins. eS10 interacts with GCN1 (via middle region); this interaction is direct and promotes GCN2 kinase activity.

The protein localises to the cytoplasm. Its function is as follows. Component of the ribosome, a large ribonucleoprotein complex responsible for the synthesis of proteins in the cell. The small ribosomal subunit (SSU) binds messenger RNAs (mRNAs) and translates the encoded message by selecting cognate aminoacyl-transfer RNA (tRNA) molecules. The large subunit (LSU) contains the ribosomal catalytic site termed the peptidyl transferase center (PTC), which catalyzes the formation of peptide bonds, thereby polymerizing the amino acids delivered by tRNAs into a polypeptide chain. The nascent polypeptides leave the ribosome through a tunnel in the LSU and interact with protein factors that function in enzymatic processing, targeting, and the membrane insertion of nascent chains at the exit of the ribosomal tunnel. eS10 plays a role as a positive regulator of the GCN2 kinase activity by stimulating GCN1-mediated GCN2 activation. This chain is Small ribosomal subunit protein eS10A (rps1001), found in Schizosaccharomyces pombe (strain 972 / ATCC 24843) (Fission yeast).